The following is a 313-amino-acid chain: tRNA dimethylallyltransferase (313 aa).

17–24 (GPTASGKT) serves as a coordination point for ATP. Substrate is bound at residue 19–24 (TASGKT). Interaction with substrate tRNA stretches follow at residues 42-45 (DSAL), 166-170 (QRLSR), and 247-252 (RCVGYR).

The protein belongs to the IPP transferase family. Monomer. The cofactor is Mg(2+).

The enzyme catalyses adenosine(37) in tRNA + dimethylallyl diphosphate = N(6)-dimethylallyladenosine(37) in tRNA + diphosphate. Functionally, catalyzes the transfer of a dimethylallyl group onto the adenine at position 37 in tRNAs that read codons beginning with uridine, leading to the formation of N6-(dimethylallyl)adenosine (i(6)A). The sequence is that of tRNA dimethylallyltransferase from Yersinia pseudotuberculosis serotype O:1b (strain IP 31758).